We begin with the raw amino-acid sequence, 515 residues long: Probable cytosol aminopeptidase (515 aa).

2 residues coordinate Mn(2+): K279 and D284. Residue K291 is part of the active site. Residues D302, D361, and E363 each contribute to the Mn(2+) site. R365 is a catalytic residue.

The protein belongs to the peptidase M17 family. The cofactor is Mn(2+).

It is found in the cytoplasm. It carries out the reaction Release of an N-terminal amino acid, Xaa-|-Yaa-, in which Xaa is preferably Leu, but may be other amino acids including Pro although not Arg or Lys, and Yaa may be Pro. Amino acid amides and methyl esters are also readily hydrolyzed, but rates on arylamides are exceedingly low.. It catalyses the reaction Release of an N-terminal amino acid, preferentially leucine, but not glutamic or aspartic acids.. Presumably involved in the processing and regular turnover of intracellular proteins. Catalyzes the removal of unsubstituted N-terminal amino acids from various peptides. The polypeptide is Probable cytosol aminopeptidase (Mycobacterium tuberculosis (strain ATCC 25177 / H37Ra)).